Here is a 58-residue protein sequence, read N- to C-terminus: Histatherin (58 aa).

The first 19 residues, methionine 1 to alanine 19, serve as a signal peptide directing secretion.

Belongs to the histatin/statherin family. As to expression, expressed in mammary glands.

It localises to the secreted. This Bos taurus (Bovine) protein is Histatherin.